We begin with the raw amino-acid sequence, 714 residues long: Transcription factor SFL2 (714 aa).

A DNA-binding region spans residues 15–134 (AFVHKLYTML…LVYIKRRSSS (120 aa)). Disordered regions lie at residues 187–467 (YYQQ…VGVT), 565–658 (STSV…NNTN), and 670–714 (SHSQ…NMNK). 2 stretches are compositionally biased toward pro residues: residues 193–207 (GQVP…PPHQ) and 223–235 (QPPP…PPQP). Positions 266-275 (LDQTQPLSYT) are enriched in polar residues. A compositionally biased stretch (low complexity) spans 276-285 (PQLEYQQQQY). The segment covering 286–296 (PQPPLPPPPPQ) has biased composition (pro residues). Composition is skewed to polar residues over residues 310-321 (DNLSRPSPNEQH) and 354-372 (SEGS…LNNE). Over residues 376 to 389 (ESSTSSSSTTVTST) the composition is skewed to low complexity. 2 stretches are compositionally biased toward polar residues: residues 413 to 435 (SRMN…TQNG) and 444 to 461 (LIPS…TGTD). The segment covering 574–591 (GPFSTSTSTSTTSPTLSS) has biased composition (low complexity). Polar residues predominate over residues 599 to 608 (EPQNSTIANG). Low complexity-rich tracts occupy residues 609–641 (TSIR…RQLS) and 648–658 (QQQQQPNNNTN). The span at 703-714 (SKSDDDTDNMNK) shows a compositional bias: basic and acidic residues.

It belongs to the HSF family.

It localises to the nucleus. Functionally, transcription factor that plays a role of activator of filamentous growth and which is involved in invasive growth at a high temperature. Required for human oral epithelium colonization and damage. Promotes filamentous growth in EFG1- and FLO8-dependent manners. Antagonizes functions of SFL1. This chain is Transcription factor SFL2 (SFL2), found in Candida albicans (strain SC5314 / ATCC MYA-2876) (Yeast).